Consider the following 368-residue polypeptide: MDAIRKQASRLREQVARQQQAVFKQFGGGGYGSGLADEAELNQHQKLEKLYISTRAAKHYQRDIVRGVEGYIVTGSKQVEIGTKLSEDSRKYGSENTCTNGNVLTRAALNYGRARAQMEKERGNMLKALGTQVAEPLRAMVLGAPLEDARHLAQRYDRMRQEAEAQATEVARRQAKARESQGNPDILMKLESAEAKLHDLKSNMTILGKEAASALASVEDQQQKLTLERLLSMVESERAYHQRVLQILDQLEGEMVSERQRIEAPSTPSSADSMPPPPSYEEANGVFASQMHDTSTDSMGYFLGEVLFPYHGVTDVELSLSTGEYVVVRKVTGSGWAEGECKGKAGWFPYGYIERRERVLASKVSEVF.

2 coiled-coil regions span residues 1-21 (MDAIRKQASRLREQVARQQQA) and 146-210 (LEDA…LGKE). The BAR domain occupies 1 to 264 (MDAIRKQASR…MVSERQRIEA (264 aa)). The segment at 258–281 (ERQRIEAPSTPSSADSMPPPPSYE) is disordered. Positions 299–358 (MGYFLGEVLFPYHGVTDVELSLSTGEYVVVRKVTGSGWAEGECKGKAGWFPYGYIERRER) constitute an SH3 domain.

As to quaternary structure, homodimer. Interacts with FREE1. Interacts (via SH3 domain) with ATG8E and ATG8F. Component of a phosphoinositide 3-kinase (PI3K) complex containing ATG6, SH3P2 and FREE1. Binds to SH3P3 and DRP1A. Forms a complex made of SH3P2 and DRP1A and triggers its accumulation at the cell plate. In terms of tissue distribution, highly expressed in seedlings. Detected in flowers, leaves and stems.

The protein resides in the cytoplasm. It is found in the cytoplasmic vesicle. It localises to the clathrin-coated vesicle. Its subcellular location is the cell membrane. The protein localises to the late endosome. The protein resides in the autophagosome membrane. Functionally, regulator for autophaosome formation and/or maturation. Binds phosphatidylinositol-phosphate; highest affinity for vesicles containing PtdIns(3,4,5)P(3), followed by those containing PtdIns(4,5)P(2) and PtdIns(3,4)P(2), with minimal binding to phosphatidylinositol monophosphates, including PtdIns(3)P. Together with DRP1A, converts the fused vesicles to tubular structures at the cell plate during cytokinesis. This chain is SH3 domain-containing protein 2, found in Arabidopsis thaliana (Mouse-ear cress).